A 1692-amino-acid polypeptide reads, in one-letter code: Fatty acid synthase alpha subunit hexA (1692 aa).

Positions 44–80 (AVEEPVDETPAPETAPERPPLSRAKTAAVKPQETAAP) are disordered. The Carrier domain occupies 90-174 (LSAEEIVRAL…RVSSALLSKL (85 aa)). Residue Ser-125 is modified to O-(pantetheine 4'-phosphoryl)serine. The ketoreductase (KR) domain stretch occupies residues 508 to 746 (FAGKNILITG…IAMLMTPELV (239 aa)). The Ketosynthase family 3 (KS3) domain maps to 948 to 1430 (KEYLHEVAVE…QKGGQVVGVA (483 aa)). Cys-1135 functions as the For beta-ketoacyl synthase activity in the catalytic mechanism. Residues 1263–1287 (GQAQLDKSSPSTNTTSRTSSVSLAR) form a disordered region. Over residues 1270–1284 (SSPSTNTTSRTSSVS) the composition is skewed to low complexity. Catalysis depends on for beta-ketoacyl synthase activity residues His-1315 and His-1356. Asp-1569 is a Mg(2+) binding site. Acetyl-CoA-binding positions include 1569–1571 (DLV), 1615–1625 (EAVFKCLHTQT), 1639–1642 (KSDN), and 1668–1670 (ISH). Ser-1669 is a Mg(2+) binding site.

The protein belongs to the thiolase-like superfamily. Fungal fatty acid synthetase subunit alpha family. In terms of assembly, [Alpha(6)beta(6)] hexamers of two multifunctional subunits (alpha and beta). 4'-phosphopantetheine is transferred from CoA to a specific serine of the acyl carrier domain by the C-terminal PPT domain. This modification is essential for activity because fatty acids are bound in thioester linkage to the sulfhydryl of the prosthetic group.

It carries out the reaction acetyl-CoA + n malonyl-CoA + 2n NADPH + 4n H(+) = a long-chain-acyl-CoA + n CoA + n CO2 + 2n NADP(+).. The catalysed reaction is a fatty acyl-[ACP] + malonyl-[ACP] + H(+) = a 3-oxoacyl-[ACP] + holo-[ACP] + CO2. The enzyme catalyses a (3R)-hydroxyacyl-[ACP] + NADP(+) = a 3-oxoacyl-[ACP] + NADPH + H(+). The protein operates within mycotoxin biosynthesis. In terms of biological role, fatty acid synthase alpha subunit; part of the fragmented gene cluster that mediates the biosynthesis of dothistromin (DOTH), a polyketide toxin very similar in structure to the aflatoxin precursor, versicolorin B. The first step of the pathway is the conversion of acetate to norsolorinic acid (NOR) and requires the fatty acid synthase subunits hexA and hexB, as well as the polyketide synthase pksA. PksA combines a hexanoyl starter unit and 7 malonyl-CoA extender units to synthesize the precursor NOR. The hexanoyl starter unit is provided to the acyl-carrier protein (ACP) domain by the fungal fatty acid synthase hexA/hexB. The second step is the conversion of NOR to averantin (AVN) and requires the norsolorinic acid ketoreductase nor1, which catalyzes the dehydration of norsolorinic acid to form (1'S)-averantin. The cytochrome P450 monooxygenase avnA then catalyzes the hydroxylation of AVN to 5'hydroxyaverantin (HAVN). The next step is performed by adhA that transforms HAVN to averufin (AVF). Averufin might then be converted to hydroxyversicolorone by cypX and avfA. Hydroxyversicolorone is further converted versiconal hemiacetal acetate (VHA) by moxY. VHA is then the substrate for the versiconal hemiacetal acetate esterase est1 to yield versiconal (VAL). Versicolorin B synthase vbsA then converts VAL to versicolorin B (VERB) by closing the bisfuran ring. Then, the activity of the versicolorin B desaturase verB leads to versicolorin A (VERA). DotB, a predicted chloroperoxidase, may perform epoxidation of the A-ring of VERA. Alternatively, a cytochrome P450, such as cypX or avnA could catalyze this step. It is also possible that another, uncharacterized, cytochrome P450 enzyme is responsible for this step. Opening of the epoxide could potentially be achieved by the epoxide hydrolase epoA. However, epoA seems not to be required for DOTH biosynthesis, but other epoxide hydrolases may have the ability to complement this hydrolysis. Alternatively, opening of the epoxide ring could be achieved non-enzymatically. The next step is the deoxygenation of ring A to yield the 5,8-dihydroxyanthraquinone which is most likely catalyzed by the NADPH dehydrogenase encoded by ver1. The last stages of DOTH biosynthesis are proposed to involve hydroxylation of the bisfuran. OrdB and norB might have oxidative roles here. An alternative possibility is that cytochrome P450 monoogenases such as avnA and cypX might perform these steps in addition to previously proposed steps. The protein is Fatty acid synthase alpha subunit hexA of Dothistroma septosporum (strain NZE10 / CBS 128990) (Red band needle blight fungus).